Consider the following 141-residue polypeptide: Large ribosomal subunit protein uL11 (141 aa).

It belongs to the universal ribosomal protein uL11 family. As to quaternary structure, part of the ribosomal stalk of the 50S ribosomal subunit. Interacts with L10 and the large rRNA to form the base of the stalk. L10 forms an elongated spine to which L12 dimers bind in a sequential fashion forming a multimeric L10(L12)X complex. In terms of processing, one or more lysine residues are methylated.

Its function is as follows. Forms part of the ribosomal stalk which helps the ribosome interact with GTP-bound translation factors. The chain is Large ribosomal subunit protein uL11 from Streptococcus thermophilus (strain CNRZ 1066).